We begin with the raw amino-acid sequence, 312 residues long: Borealin-2 (312 aa).

Residues 1-10 are compositionally biased toward basic residues; that stretch reads MPPRKAPAKR. The tract at residues 1–26 is disordered; that stretch reads MPPRKAPAKRRSTDSGVERDRGALSQ. Residues 11–26 show a composition bias toward basic and acidic residues; it reads RSTDSGVERDRGALSQ.

The protein belongs to the borealin family. Component of the CPC complex.

It localises to the nucleus. The protein localises to the chromosome. It is found in the centromere. Functionally, component of the chromosomal passenger complex (CPC), a complex that acts as a key regulator of mitosis. The CPC complex has essential functions at the centromere in ensuring correct chromosome alignment and segregation and is required for chromatin-induced microtubule stabilization and spindle assembly. The sequence is that of Borealin-2 from Gallus gallus (Chicken).